A 42-amino-acid polypeptide reads, in one-letter code: Beta-defensin 13 (42 aa).

3 cysteine pairs are disulfide-bonded: Cys9-Cys38, Cys16-Cys31, and Cys21-Cys39.

Belongs to the beta-defensin family. As to expression, neutrophilic granules.

The protein resides in the secreted. In terms of biological role, has bactericidal activity. Active against E.coli ML35 and S.aureus 502A. This is Beta-defensin 13 (DEFB13) from Bos taurus (Bovine).